The following is an 82-amino-acid chain: Small ribosomal subunit protein bS16 (82 aa).

This sequence belongs to the bacterial ribosomal protein bS16 family.

This chain is Small ribosomal subunit protein bS16, found in Aeromonas salmonicida (strain A449).